Here is a 346-residue protein sequence, read N- to C-terminus: MEEKYLPELMAEKDSLDPSFTHALRLVNQEIEKFQKGEGKDEEKYIDVVINKNMKLGQKVLIPVKQFPKFNFVGKLLGPRGNSLKRLQEETLTKMSILGKGSMRDKAKEEELRKSGEAKYFHLNDDLHVLIEVFAPPAEAYARMGHALEEIKKFLIPDYNDEIRQAQLQELTYLNGGSENADVPVVRGKPTLRTRGVPAPAITRGRGGVTARPVGVVVPRGTPTPRGVLSTRGPVSRGRGLLTPRARGVPPTGYRPPPPPPTQETYGEYDYDDGYGTAYDEQSYDSYDNSYSTPAQSGADYYDYGHGLSEETYDSYGQEEWTNSRHKAPSARTAKGVYRDQPYGRY.

The tract at residues 1–160 is involved in homodimerization; the sequence is MEEKYLPELM…IKKFLIPDYN (160 aa). K4 participates in a covalent cross-link: Glycyl lysine isopeptide (Lys-Gly) (interchain with G-Cter in SUMO2). In terms of domain architecture, KH spans 61 to 127; sequence LIPVKQFPKF…AKYFHLNDDL (67 aa). Residues 212 to 251 form an interaction with SIAH1 region; it reads RPVGVVVPRGTPTPRGVLSTRGPVSRGRGLLTPRARGVPP. Residues 213-228 are compositionally biased toward low complexity; sequence PVGVVVPRGTPTPRGV. Disordered stretches follow at residues 213-267 and 318-346; these read PVGV…ETYG and QEEW…YGRY. Over residues 253–262 the composition is skewed to pro residues; sequence GYRPPPPPPT.

This sequence belongs to the KHDRBS family. Self-associates to form homooligomers; dimerization increases RNA affinity. Interacts with KHDRBS2/SLM-1. Interacts with KHDRBS1/SAM68; heterooligomer formation of KHDRBS family proteins may modulate RNA substrate specificity. Interacts with the splicing regulatory proteins SFRS9, SAFB and YTHDC1. Interacts with HNRPL. Interacts with RBMX, RBMY1A1, p85 subunit of PI3-kinase, SERPINB5. Interacts with SIAH1 which promotes targeting for degradation. Post-translationally, phosphorylated on tyrosine residues. Isoform 1 C-terminal region is tyrosine-rich, but isoform 2 lacking this C-terminal region is also tyrosine-phosphorylated. As to expression, ubiquitous with higher expression in testis, skeletal muscle and brain. Expressed in the kidney only in podocytes, the glomerular epithelial cells of the kidney. Strongly expressed after meiosis.

It is found in the nucleus. In terms of biological role, RNA-binding protein that plays a role in the regulation of alternative splicing and influences mRNA splice site selection and exon inclusion. Binds preferentially to the 5'-[AU]UAAA-3' motif in vitro. Binds optimally to RNA containing 5'-[AU]UAA-3' as a bipartite motif spaced by more than 15 nucleotides. Binds poly(A). RNA-binding abilities are down-regulated by tyrosine kinase PTK6. Involved in splice site selection of vascular endothelial growth factor. In vitro regulates CD44 alternative splicing by direct binding to purine-rich exonic enhancer. Can regulate alternative splicing of neurexins NRXN1-3 in the laminin G-like domain 6 containing the evolutionary conserved neurexin alternative spliced segment 4 (AS4) involved in neurexin selective targeting to postsynaptic partners such as neuroligins and LRRTM family members. Targeted, cell-type specific splicing regulation of NRXN1 at AS4 is involved in neuronal glutamatergic synapse function and plasticity. May regulate expression of KHDRBS2/SLIM-1 in defined brain neuron populations by modifying its alternative splicing. Can bind FABP9 mRNA. May play a role as a negative regulator of cell growth. Inhibits cell proliferation. (Microbial infection) Involved in post-transcriptional regulation of HIV-1 gene expression. This Homo sapiens (Human) protein is KH domain-containing, RNA-binding, signal transduction-associated protein 3 (KHDRBS3).